The chain runs to 496 residues: Genome polyprotein (496 aa).

Residues 1 to 447 lie on the Extracellular side of the membrane; the sequence is SRCTHLENRD…HTVLGGAFNS (447 aa). Disulfide bonds link cysteine 3-cysteine 30, cysteine 60-cysteine 116, cysteine 60-cysteine 121, cysteine 74-cysteine 105, cysteine 92-cysteine 116, and cysteine 92-cysteine 121. The fusion peptide stretch occupies residues 98-111; that stretch reads DRGWGNHCGLFGKG. Asparagine 154 carries N-linked (GlcNAc...) asparagine; by host glycosylation. Intrachain disulfides connect cysteine 186–cysteine 290 and cysteine 307–cysteine 338. The chain crosses the membrane as a helical span at residues 448–468; the sequence is IFGGVGFLPKLLMGVALAWLG. At 469-479 the chain is on the cytoplasmic side; that stretch reads LNTRNPTMSMS. A helical membrane pass occupies residues 480–496; the sequence is FLLTGGLVLAMTLGVGA.

Homodimer; in the endoplasmic reticulum and Golgi. N-glycosylated.

It is found in the virion membrane. The protein resides in the host endoplasmic reticulum membrane. Binds to host cell surface receptor and mediates fusion between viral and cellular membranes. Envelope protein is synthesized in the endoplasmic reticulum in the form of heterodimer with protein prM. They play a role in virion budding in the ER, and the newly formed immature particle is covered with 60 spikes composed of heterodimer between precursor prM and envelope protein E. The virion is transported to the Golgi apparatus where the low pH causes dissociation of PrM-E heterodimers and formation of E homodimers. prM-E cleavage is ineficient, and many virions are only partially matured. These uncleaved prM would play a role in immune evasion. This Bos taurus (Bovine) protein is Genome polyprotein.